Reading from the N-terminus, the 347-residue chain is Large ribosomal subunit protein uL10 (347 aa).

The tract at residues 312–347 is disordered; sequence AAAPAEEEVKKEEEPEEEEEDHAEEDGMAGLGALFG. The span at 325–338 shows a compositional bias: acidic residues; it reads EPEEEEEDHAEEDG.

It belongs to the universal ribosomal protein uL10 family. As to quaternary structure, part of the 50S ribosomal subunit. Forms part of the ribosomal stalk which helps the ribosome interact with GTP-bound translation factors. Forms a heptameric L10(L12)2(L12)2(L12)2 complex, where L10 forms an elongated spine to which the L12 dimers bind in a sequential fashion.

In terms of biological role, forms part of the ribosomal stalk, playing a central role in the interaction of the ribosome with GTP-bound translation factors. The chain is Large ribosomal subunit protein uL10 from Methanosarcina acetivorans (strain ATCC 35395 / DSM 2834 / JCM 12185 / C2A).